The primary structure comprises 126 residues: MIFVDTNVFMYAVGRDHPLRMPAREFLEHSLEHQDRLVTSAEAMQELLNAYVPVGRNSTLDSALTLVRALTEIWPVEAADVAHARTLHHRHPGLGARDLLHLACCQRRGVTRIKTFDHTLASAFRS.

The region spanning 2–118 is the PINc domain; that stretch reads IFVDTNVFMY…GVTRIKTFDH (117 aa). Mg(2+) is bound by residues D5 and D98.

The protein belongs to the PINc/VapC protein family. Mg(2+) serves as cofactor.

In terms of biological role, toxic component of a type II toxin-antitoxin (TA) system. An RNase. The cognate antitoxin is VapB23. The polypeptide is Ribonuclease VapC23 (Mycobacterium tuberculosis (strain CDC 1551 / Oshkosh)).